We begin with the raw amino-acid sequence, 169 residues long: Cuticle protein 21 (169 aa).

Repeat copies occupy residues 21-24 (AAPV), 27-30 (AAPA), 33-36 (AAPV), 39-42 (AAPA), 47-50 (AAPV), and 53-56 (AAPA). Positions 65–135 (NPQYSYAYNV…KEAGAHPAPV (71 aa)) constitute a Chitin-binding type R&amp;R domain. A run of 3 repeats spans residues 140–143 (AAPV), 146–149 (AAPA), and 160–163 (AAPA).

Functionally, component of the cuticle of migratory locust which contains more than 100 different structural proteins. This Locusta migratoria (Migratory locust) protein is Cuticle protein 21 (ACP21).